We begin with the raw amino-acid sequence, 311 residues long: 4-hydroxy-3-methylbut-2-enyl diphosphate reductase (311 aa).

Cys-12 serves as a coordination point for [4Fe-4S] cluster. Residues His-41 and His-74 each contribute to the (2E)-4-hydroxy-3-methylbut-2-enyl diphosphate site. Residues His-41 and His-74 each contribute to the dimethylallyl diphosphate site. His-41 and His-74 together coordinate isopentenyl diphosphate. Residue Cys-96 coordinates [4Fe-4S] cluster. His-124 is a (2E)-4-hydroxy-3-methylbut-2-enyl diphosphate binding site. His-124 contributes to the dimethylallyl diphosphate binding site. His-124 is a binding site for isopentenyl diphosphate. Glu-126 serves as the catalytic Proton donor. Residue Thr-168 participates in (2E)-4-hydroxy-3-methylbut-2-enyl diphosphate binding. Cys-198 lines the [4Fe-4S] cluster pocket. (2E)-4-hydroxy-3-methylbut-2-enyl diphosphate-binding residues include Ser-226, Ser-227, Asn-228, and Ser-270. Dimethylallyl diphosphate is bound by residues Ser-226, Ser-227, Asn-228, and Ser-270. Isopentenyl diphosphate-binding residues include Ser-226, Ser-227, Asn-228, and Ser-270.

This sequence belongs to the IspH family. The cofactor is [4Fe-4S] cluster.

It catalyses the reaction isopentenyl diphosphate + 2 oxidized [2Fe-2S]-[ferredoxin] + H2O = (2E)-4-hydroxy-3-methylbut-2-enyl diphosphate + 2 reduced [2Fe-2S]-[ferredoxin] + 2 H(+). It carries out the reaction dimethylallyl diphosphate + 2 oxidized [2Fe-2S]-[ferredoxin] + H2O = (2E)-4-hydroxy-3-methylbut-2-enyl diphosphate + 2 reduced [2Fe-2S]-[ferredoxin] + 2 H(+). It functions in the pathway isoprenoid biosynthesis; dimethylallyl diphosphate biosynthesis; dimethylallyl diphosphate from (2E)-4-hydroxy-3-methylbutenyl diphosphate: step 1/1. Its pathway is isoprenoid biosynthesis; isopentenyl diphosphate biosynthesis via DXP pathway; isopentenyl diphosphate from 1-deoxy-D-xylulose 5-phosphate: step 6/6. Catalyzes the conversion of 1-hydroxy-2-methyl-2-(E)-butenyl 4-diphosphate (HMBPP) into a mixture of isopentenyl diphosphate (IPP) and dimethylallyl diphosphate (DMAPP). Acts in the terminal step of the DOXP/MEP pathway for isoprenoid precursor biosynthesis. The protein is 4-hydroxy-3-methylbut-2-enyl diphosphate reductase of Saccharophagus degradans (strain 2-40 / ATCC 43961 / DSM 17024).